Consider the following 266-residue polypeptide: Protein-ADP-ribose hydrolase (266 aa).

In terms of domain architecture, Macro spans 74–265 (TDLKDLKPIK…LYKEAFNRDA (192 aa)). Residues Asp-93, Ile-94, and Asn-107 each contribute to the ADP-D-ribose site. Residues Cys-113, His-118, and Cys-120 each contribute to the Zn(2+) site. ADP-D-ribose is bound by residues Cys-120, Ile-121, Asp-122, Ser-212, Thr-213, Gly-214, and Phe-216.

This sequence belongs to the MacroD-type family. Zn-Macro subfamily. Zn(2+) serves as cofactor.

It carries out the reaction 4-O-(ADP-D-ribosyl)-L-aspartyl-[protein] + H2O = L-aspartyl-[protein] + ADP-D-ribose + H(+). Functionally, ADP-ribosylhydrolase that specifically reverses the SirTM-mediated mono-ADP-ribosylation at an asparatate residue of GcvH-L, by releasing ADP-ribose from the target protein. May play a role in the regulation of the response to host-induced oxidative stress. This Staphylococcus aureus (strain MRSA252) protein is Protein-ADP-ribose hydrolase.